The following is a 392-amino-acid chain: O-phospho-L-seryl-tRNA:Cys-tRNA synthase (392 aa).

Residues 84–85 (AR), Asn-191, and 214–216 (SGH) contribute to the pyridoxal 5'-phosphate site. Lys-217 is modified (N6-(pyridoxal phosphate)lysine).

The protein belongs to the SepCysS family. In terms of assembly, homodimer. Interacts with SepRS. The cofactor is pyridoxal 5'-phosphate.

It carries out the reaction O-phospho-L-seryl-tRNA(Cys) + hydrogen sulfide + H(+) = L-cysteinyl-tRNA(Cys) + phosphate. Its function is as follows. Converts O-phospho-L-seryl-tRNA(Cys) (Sep-tRNA(Cys)) to L-cysteinyl-tRNA(Cys) (Cys-tRNA(Cys)). This is O-phospho-L-seryl-tRNA:Cys-tRNA synthase from Methanopyrus kandleri (strain AV19 / DSM 6324 / JCM 9639 / NBRC 100938).